A 21-amino-acid polypeptide reads, in one-letter code: Antimicrobial peptide scolopin-1 (21 aa).

Expressed by the venom gland.

It is found in the secreted. Its function is as follows. Antimicrobial peptide against both Gram-positive, -negative and yeast. Also induces histamine release by mast cells and shows moderate hemolytic activities against both human and rabbit red cells. The polypeptide is Antimicrobial peptide scolopin-1 (Scolopendra mutilans (Chinese red-headed centipede)).